The sequence spans 343 residues: Cysteine proteinase 1 (343 aa).

The signal sequence occupies residues 1–18 (MKVILLFVLAVFTVFVSS). Positions 19-117 (RGIPLEEQSQ…DYLDDEFINS (99 aa)) are cleaved as a propeptide — activation peptide. Cystine bridges form between cysteine 139/cysteine 190, cysteine 173/cysteine 224, and cysteine 279/cysteine 332. Cysteine 142 is an active-site residue. Residues histidine 286 and asparagine 311 contribute to the active site.

The protein belongs to the peptidase C1 family. Post-translationally, phosphoglycosylated, contains GlcNAc-alpha-1-P-Ser residues.

The protein resides in the lysosome. Cysteine proteinases 1 and 2 are believed to participate in the breakdown of protein during differentiation of Dictyostelium as a response to starvation. The chain is Cysteine proteinase 1 (cprA) from Dictyostelium discoideum (Social amoeba).